The chain runs to 212 residues: MNSQQCVIIAIAGASASGKSLIAKTIFDELRRDLGTDQIGVINEDAYYRDQSHLSMDERVLTNYDHPKALDHQLLCTHLQLLKSGEAVDIPCYSYTEHTRTAETLTMTPKKVIILEGILLLTDPKLRALMDASVFMDTPLDICFLRRLTRDVAERGRTMESVISQYKKTVRPMFLQFIEPSKQYADIIVPRGGKNRIATDILKTRIQHLLAK.

ATP is bound at residue 13–20; sequence GASASGKS.

It belongs to the uridine kinase family.

The protein resides in the cytoplasm. The catalysed reaction is uridine + ATP = UMP + ADP + H(+). It carries out the reaction cytidine + ATP = CMP + ADP + H(+). It participates in pyrimidine metabolism; CTP biosynthesis via salvage pathway; CTP from cytidine: step 1/3. Its pathway is pyrimidine metabolism; UMP biosynthesis via salvage pathway; UMP from uridine: step 1/1. The chain is Uridine kinase from Shewanella baltica (strain OS155 / ATCC BAA-1091).